Consider the following 431-residue polypeptide: MDGYVMVGVNHQTTPMALRDRLVLDDPALAALLVRLRARGVTEALALSTCDRVEIFGHGGDPRALRALLLAELCAVGPIEPAALAGQMVDLRGLAVVAHMFRITSALESQVLGEPHILGQVKAAHRIARDAGTVGSATEALMQAAYAIAKRVRSETRISEGPVSLAAVAAQIARDLHGDLGETCLLLLGTQEMGELIAEQLQMAGVGRLVVCAPRRPRAEAVAARLGASVGDHGALLDLLPNADIVVVGVGGGLLALGEEAMRRTLKRRRNRPVFIVDAGVPGNVEPSVQRLEAAFLYDLADLEAVAEEGRAARDQASREAHALVADAVAAFERHRAERAAVPAIAALRAHFEGERLRALAEAPDDAEKATRLLVGRLLHGPSEALRDLAAGSADKEFMTVRAEMLLRRLFDLPTSIAETGATDREDGSKG.

Substrate is bound by residues 49–52, S109, 114–116, and Q120; these read TCDR and EPH. The active-site Nucleophile is C50. 189–194 lines the NADP(+) pocket; it reads GTQEMG.

Belongs to the glutamyl-tRNA reductase family. In terms of assembly, homodimer.

It catalyses the reaction (S)-4-amino-5-oxopentanoate + tRNA(Glu) + NADP(+) = L-glutamyl-tRNA(Glu) + NADPH + H(+). The protein operates within porphyrin-containing compound metabolism; protoporphyrin-IX biosynthesis; 5-aminolevulinate from L-glutamyl-tRNA(Glu): step 1/2. It participates in porphyrin-containing compound metabolism; chlorophyll biosynthesis. Catalyzes the NADPH-dependent reduction of glutamyl-tRNA(Glu) to glutamate 1-semialdehyde (GSA). In Rhodospirillum rubrum (strain ATCC 11170 / ATH 1.1.1 / DSM 467 / LMG 4362 / NCIMB 8255 / S1), this protein is Glutamyl-tRNA reductase.